The following is a 1288-amino-acid chain: (E3-independent) E2 ubiquitin-conjugating enzyme UBE2O (1288 aa).

Low complexity-rich tracts occupy residues 1 to 26 (MADP…APAA) and 34 to 47 (ATDS…DSGP). Disordered regions lie at residues 1-51 (MADP…EAGS) and 80-109 (EDSD…EGRA). Ser45, Ser82, Ser84, and Ser394 each carry phosphoserine. Disordered stretches follow at residues 396 to 529 (TPDT…KNKV) and 711 to 743 (ESDY…NGLV). The segment covering 401 to 418 (CPRDHSMEDPDKKGEARA) has biased composition (basic and acidic residues). Ser436 carries the phosphoserine modification. Positions 440–450 (MQDEGSEELQE) are enriched in acidic residues. Residues 462–472 (EGGDDGLHSAE) are compositionally biased toward basic and acidic residues. The span at 473 to 485 (QDADDEAADDTDD) shows a compositional bias: acidic residues. A phosphothreonine mark is found at Thr483 and Thr486. Residues 486–502 (TSSVTSSASSTTSSQSG) show a composition bias toward low complexity. Position 510 is a phosphoserine (Ser510). A compositionally biased stretch (basic residues) spans 517–528 (NLKRKHKRKKNK). The segment covering 717–726 (VEGSSSGASS) has biased composition (low complexity). Residues 727 to 737 (DEWEDDSDSWE) show a composition bias toward acidic residues. The stretch at 809–879 (RELKEAIKIL…IAEEEKMEAV (71 aa)) forms a coiled coil. Ser833 is modified (phosphoserine). At Thr835 the chain carries Phosphothreonine. A Phosphoserine modification is found at Ser836. The segment covering 872-890 (EEEKMEAVPDTERKEEKPE) has biased composition (basic and acidic residues). The interval 872–899 (EEEKMEAVPDTERKEEKPEVQSPVKAEW) is disordered. Ser893 bears the Phosphoserine mark. A UBC core domain is found at 950-1110 (KFFSTVRKEM…ALIRVVQSMT (161 aa)). The active-site Glycyl thioester intermediate is the Cys1037. A disordered region spans residues 1158 to 1247 (GALKDSSSLE…RSFLPEKSGY (90 aa)).

The protein belongs to the ubiquitin-conjugating enzyme family. Interacts with CPNE1 (via VWFA domain) and CPNE4 (via VWFA domain). Interacts with UBR2. Post-translationally, phosphorylated. Phosphorylation affects subcellular location. In terms of processing, ubiquitinated: autoubiquitinates, possibly affecting its subcellular location. In terms of tissue distribution, highly expressed in reticulocytes.

It is found in the cytoplasm. Its subcellular location is the nucleus. The enzyme catalyses S-ubiquitinyl-[E1 ubiquitin-activating enzyme]-L-cysteine + [acceptor protein]-L-lysine = [E1 ubiquitin-activating enzyme]-L-cysteine + N(6)-monoubiquitinyl-[acceptor protein]-L-lysine.. It participates in protein modification; protein ubiquitination. Its activity is regulated as follows. Inhibited by inorganic arsenite such as phenylarsenoxides. In terms of biological role, E2/E3 hybrid ubiquitin-protein ligase that displays both E2 and E3 ligase activities and mediates monoubiquitination of target proteins. Negatively regulates TRAF6-mediated NF-kappa-B activation independently of its E2 activity. Acts as a positive regulator of BMP7 signaling by mediating monoubiquitination of SMAD6, thereby regulating adipogenesis. Mediates monoubiquitination at different sites of the nuclear localization signal (NLS) of BAP1, leading to cytoplasmic retention of BAP1. Also able to monoubiquitinate the NLS of other chromatin-associated proteins, such as INO80 and CXXC1, affecting their subcellular location. Acts as a regulator of retrograde transport by assisting the TRIM27:MAGEL2 E3 ubiquitin ligase complex to mediate 'Lys-63'-linked ubiquitination of WASHC1, leading to promote endosomal F-actin assembly. The chain is (E3-independent) E2 ubiquitin-conjugating enzyme UBE2O (Ube2o) from Mus musculus (Mouse).